The chain runs to 443 residues: Citrate transporter CitP (443 aa).

Helical transmembrane passes span 27 to 47 (ISGI…IAIS), 59 to 79 (IFAL…LPIF), 83 to 103 (LGGG…TNVM), 114 to 134 (FING…SSLF), 151 to 171 (VAFI…VIIG), 177 to 197 (AILY…IVPL), 209 to 229 (SAGI…LAII), 268 to 288 (YVQL…GTML), 294 to 314 (GINA…FGLL), 322 to 342 (VIMF…AGVG), 350 to 370 (VLLA…IVAI), 388 to 410 (AAIT…VLAA), and 422 to 442 (MGNR…VTFM).

Belongs to the 2-hydroxycarboxylate transporter (2-HCT) (TC 2.A.24) family.

Its subcellular location is the cell membrane. It carries out the reaction (R)-lactate(in) + citrate(out) = (R)-lactate(out) + citrate(in). The enzyme catalyses (S)-lactate(in) + citrate(out) = (S)-lactate(out) + citrate(in). It catalyses the reaction citrate(in) + H(+)(in) = citrate(out) + H(+)(out). Its activity is regulated as follows. Uptake of citrate is not affected by the absence or presence of Na(+) up to 25 mM and is increasingly inhibited by increasing Mg(2+) concentrations. Functionally, secondary transporter involved in citrate metabolism. During cometabolism of citrate and glucose, catalyzes the uptake of divalent citrate into the cell coupled to the exit of monovalent lactate, a product of citrate fermentation during citrate-glucose cometabolism (precursor/product exchange). The citrate/lactate exchange is electrogenic and results in the generation of a membrane potential. In the absence of glucose, i.e. when no lactate is produced, CitP catalyzes the proton-dependent transport of citrate and malate. Transports the divalent form of citrate and malate with the concomitant uptake of one proton, therefore translocating a single unit of negative charge across the membrane. In vitro, transports a range of substrates that contain the 2-hydroxycarboxylate motif, HO-CR(2)-COO(-), with a preference for malate, citrate and monovalent 2-hydroxyisobutyrate. Modification of the OH or the COO(-) groups of the 2-hydroxycarboxylate motif drastically reduces the affinity of the transporter for the substrates, indicating their relevance in substrate recognition. Significant activity is also observed with some 2-oxocarboxylates and a 3-hydroxycarboxylate. This chain is Citrate transporter CitP, found in Leuconostoc mesenteroides subsp. mesenteroides.